Reading from the N-terminus, the 244-residue chain is ATP synthase subunit b 2 (244 aa).

The helical transmembrane segment at 2–22 (LIDWFTIVAQIINFLILVFLL) threads the bilayer.

It belongs to the ATPase B chain family. In terms of assembly, F-type ATPases have 2 components, F(1) - the catalytic core - and F(0) - the membrane proton channel. F(1) has five subunits: alpha(3), beta(3), gamma(1), delta(1), epsilon(1). F(0) has four main subunits: a(1), b(1), b'(1) and c(10-14). The alpha and beta chains form an alternating ring which encloses part of the gamma chain. F(1) is attached to F(0) by a central stalk formed by the gamma and epsilon chains, while a peripheral stalk is formed by the delta, b and b' chains.

It localises to the cellular thylakoid membrane. Functionally, f(1)F(0) ATP synthase produces ATP from ADP in the presence of a proton or sodium gradient. F-type ATPases consist of two structural domains, F(1) containing the extramembraneous catalytic core and F(0) containing the membrane proton channel, linked together by a central stalk and a peripheral stalk. During catalysis, ATP synthesis in the catalytic domain of F(1) is coupled via a rotary mechanism of the central stalk subunits to proton translocation. Component of the F(0) channel, it forms part of the peripheral stalk, linking F(1) to F(0). The sequence is that of ATP synthase subunit b 2 from Crocosphaera subtropica (strain ATCC 51142 / BH68) (Cyanothece sp. (strain ATCC 51142)).